The sequence spans 264 residues: MIRYNNNKKTIEGDRMFYTYLRGLVVLLLWSINGNAHYHNTDKIPNQDENYILVAPHRTWWDPVYMAFATKPKQFIFMAKKELFTNRIFGWWIRMCGAFPIDRENPSASAIKYPINVLKKSDRSLIMFPSGSRHSNDVKGGAALIAKMAKVRIMPVTYTGPMTLKGLISRERVDMNFGNPIDISDIKKMNDEGIETVANRIQTEFQRLDEETKQWHNDKKPNPLWWFIRIPALILAIILAILTIIFSFIASFIWNPDKKREELA.

The helical transmembrane segment at 16–36 (MFYTYLRGLVVLLLWSINGNA) threads the bilayer. The HXXXXD motif motif lies at 57-62 (HRTWWD). A helical transmembrane segment spans residues 233–253 (LILAIILAILTIIFSFIASFI).

This sequence belongs to the 1-acyl-sn-glycerol-3-phosphate acyltransferase family.

The protein resides in the membrane. The enzyme catalyses a fatty acyl-[ACP] + a 1-acyl-sn-glycero-3-phosphate = a 1,2-diacyl-sn-glycero-3-phosphate + holo-[ACP]. It catalyses the reaction hexadecanoyl-[ACP] + 1-hexadecanoyl-sn-glycero-3-phosphate = 1,2-dihexadecanoyl-sn-glycero-3-phosphate + holo-[ACP]. The protein operates within lipid metabolism; phospholipid metabolism. Functionally, converts lysophosphatidic acid (LPA) into phosphatidic acid (PA) by incorporating an acyl moiety at the 2 position. This enzyme utilizes acyl-ACP as fatty acyl donor, but not acyl-CoA. In Streptococcus pneumoniae (strain ATCC BAA-255 / R6), this protein is 1-acyl-sn-glycerol-3-phosphate acyltransferase (plsC).